Consider the following 918-residue polypeptide: Calcium-transporting ATPase type 2C member 1 (918 aa).

The Cytoplasmic segment spans residues 1–78; that stretch reads MKVARFQKIP…EPLWKKYISQ (78 aa). A helical transmembrane segment spans residues 79–95; it reads FKNPLIMLLLASAVISI. Over 96-99 the chain is Extracellular; sequence LMRQ. Residues 100–121 form a helical membrane-spanning segment; the sequence is FDDAVSITVAIVIVVTVAFVQE. At 122 to 262 the chain is on the cytoplasmic side; that stretch reads YRSEKSLEEL…PKTPLQKSMD (141 aa). Residues 263–282 form a helical membrane-spanning segment; sequence LLGKQLSFYSFGIIGIIMLV. The Extracellular segment spans residues 283 to 294; the sequence is GWLLGKDILEMF. The helical transmembrane segment at 295 to 316 threads the bilayer; that stretch reads TISVSLAVAAIPEGLPIVVTVT. The Cytoplasmic segment spans residues 317–699; the sequence is LALGVMRMVK…EGKGIYNNIK (383 aa). Asp349 serves as the catalytic 4-aspartylphosphate intermediate. Asp643 and Asp647 together coordinate Mg(2+). The chain crosses the membrane as a helical span at residues 700-722; it reads NFVRFQLSTSIAALTLISLATLM. The Extracellular segment spans residues 723-727; that stretch reads NFPNP. The helical transmembrane segment at 728–751 threads the bilayer; the sequence is LNAMQILWINIIMDGPPAQSLGVE. The Cytoplasmic segment spans residues 752-775; that stretch reads PVDKDVIRKPPRNWKDSILTKNLI. Residues 776 to 794 form a helical membrane-spanning segment; sequence LKILVSSIIIVCGTLFVFW. Over 795–801 the chain is Extracellular; the sequence is RELRDNV. The chain crosses the membrane as a helical span at residues 802-827; sequence ITPRDTTMTFTCFVFFDMFNALSSRS. At 828-842 the chain is on the cytoplasmic side; that stretch reads QTKSVFEIGLCSNKM. The chain crosses the membrane as a helical span at residues 843 to 862; the sequence is FCYAVLGSIMGQLLVIYFPP. At 863 to 875 the chain is on the extracellular side; that stretch reads LQKVFQTESLSIL. The helical transmembrane segment at 876-892 threads the bilayer; the sequence is DLLFLLGLTSSVCIVSE. At 893–918 the chain is on the cytoplasmic side; it reads IIKKVERSREKVQKNAGSASSSFLEV.

This sequence belongs to the cation transport ATPase (P-type) (TC 3.A.3) family. Type IIA subfamily. In terms of assembly, monomer. Homodimer. Expressed in hippocampal neurons in the CA3 region of the Amon's horn (at protein level). Expressed in brain, heart, lung, stomach, liver, colon and mammary gland.

It is found in the golgi apparatus. It localises to the trans-Golgi network membrane. The protein localises to the golgi stack membrane. The enzyme catalyses Ca(2+)(in) + ATP + H2O = Ca(2+)(out) + ADP + phosphate + H(+). It catalyses the reaction Mn(2+)(in) + ATP + H2O = Mn(2+)(out) + ADP + phosphate + H(+). In terms of biological role, ATP-driven pump that supplies the Golgi apparatus with Ca(2+) and Mn(2+) ions, both essential cofactors for processing and trafficking of newly synthesized proteins in the secretory pathway. Within a catalytic cycle, acquires Ca(2+) or Mn(2+) ions on the cytoplasmic side of the membrane and delivers them to the lumenal side. The transfer of ions across the membrane is coupled to ATP hydrolysis and is associated with a transient phosphorylation that shifts the pump conformation from inward-facing to outward-facing state. Plays a primary role in the maintenance of Ca(2+) homeostasis in the trans-Golgi compartment with a functional impact on Golgi and post-Golgi protein sorting as well as a structural impact on cisternae morphology. Responsible for loading the Golgi stores with Ca(2+) ions in keratinocytes, contributing to keratinocyte differentiation and epidermis integrity. Participates in Ca(2+) and Mn(2+) ions uptake into the Golgi store of hippocampal neurons and regulates protein trafficking required for neural polarity. May also play a role in the maintenance of Ca(2+) and Mn(2+) homeostasis and signaling in the cytosol while preventing cytotoxicity. The chain is Calcium-transporting ATPase type 2C member 1 from Mus musculus (Mouse).